Consider the following 255-residue polypeptide: Probable septum site-determining protein MinC (255 aa).

Residues 103–115 (SHGRRPRGERSEE) show a composition bias toward basic and acidic residues. The tract at residues 103-136 (SHGRRPRGERSEEAAEAVPAAAEPVPAPAASPAP) is disordered. The span at 127-136 (VPAPAASPAP) shows a compositional bias: pro residues.

It belongs to the MinC family. Interacts with MinD and FtsZ.

Functionally, cell division inhibitor that blocks the formation of polar Z ring septums. Rapidly oscillates between the poles of the cell to destabilize FtsZ filaments that have formed before they mature into polar Z rings. Prevents FtsZ polymerization. The polypeptide is Probable septum site-determining protein MinC (Ralstonia nicotianae (strain ATCC BAA-1114 / GMI1000) (Ralstonia solanacearum)).